The following is a 202-amino-acid chain: Interleukin-17D (202 aa).

A signal peptide spans 1 to 15 (MLVAGFLLALPPSWA). Positions 65–85 (QARNASCPAGGRPADRRFRPP) are disordered. 2 N-linked (GlcNAc...) asparagine glycosylation sites follow: N68 and N181.

The protein belongs to the IL-17 family. Expressed preferentially in adipose, skeletal muscle and CNS.

It localises to the secreted. Induces expression of IL6, CXCL8/IL8, and CSF2/GM-CSF from endothelial cells. This chain is Interleukin-17D (IL17D), found in Homo sapiens (Human).